Reading from the N-terminus, the 251-residue chain is 2,3-bisphosphoglycerate-dependent phosphoglycerate mutase (251 aa).

Substrate-binding positions include 8–15 (RHGESLWN), 21–22 (TG), arginine 60, 87–90 (ERHY), lysine 98, 114–115 (RR), and 183–184 (GN). The active-site Tele-phosphohistidine intermediate is histidine 9. The active-site Proton donor/acceptor is the glutamate 87.

It belongs to the phosphoglycerate mutase family. BPG-dependent PGAM subfamily.

The enzyme catalyses (2R)-2-phosphoglycerate = (2R)-3-phosphoglycerate. The protein operates within carbohydrate degradation; glycolysis; pyruvate from D-glyceraldehyde 3-phosphate: step 3/5. Functionally, catalyzes the interconversion of 2-phosphoglycerate and 3-phosphoglycerate. The chain is 2,3-bisphosphoglycerate-dependent phosphoglycerate mutase from Thermoanaerobacter sp. (strain X514).